The primary structure comprises 246 residues: 14-3-3 protein eta (246 aa).

Gly-2 carries the N-acetylglycine modification. Phosphoserine is present on residues Ser-25 and Ser-59.

It belongs to the 14-3-3 family. In terms of assembly, homodimer. Interacts with many nuclear hormone receptors and cofactors including AR, ESR1, ESR2, MC2R, NR3C1, NRIP1, PPARBP and THRA. Interacts with ABL1 (phosphorylated form); the interaction retains it in the cytoplasm. Interacts with ARHGEF28 and CDK16. Weakly interacts with CDKN1B. Interacts with GAB2. Interacts with KCNK18 in a phosphorylation-dependent manner. Interacts with SAMSN1. Interacts with the 'Ser-241' phosphorylated form of PDPK1. Interacts with the 'Thr-369' phosphorylated form of DAPK2. Interacts with PI4KB, TBC1D22A and TBC1D22B. Interacts with SLITRK1. Interacts with MEFV. Phosphorylated on Ser-59 by protein kinase C delta type catalytic subunit in a sphingosine-dependent fashion. In terms of tissue distribution, expressed mainly in the brain and present in other tissues albeit at lower levels.

Its function is as follows. Adapter protein implicated in the regulation of a large spectrum of both general and specialized signaling pathways. Binds to a large number of partners, usually by recognition of a phosphoserine or phosphothreonine motif. Binding generally results in the modulation of the activity of the binding partner. Negatively regulates the kinase activity of PDPK1. This chain is 14-3-3 protein eta (YWHAH), found in Homo sapiens (Human).